The sequence spans 85 residues: Anti-neuroexcitation peptide 2 (85 aa).

Positions 1–21 (MKLSLLLVISASMLIDGLVNA) are cleaved as a signal peptide. Positions 22 to 82 (DGYIRGSNGC…TWKSESNTCG (61 aa)) constitute an LCN-type CS-alpha/beta domain. 4 disulfides stabilise this stretch: Cys-31–Cys-81, Cys-35–Cys-56, Cys-42–Cys-63, and Cys-46–Cys-65.

Belongs to the long (4 C-C) scorpion toxin superfamily. Sodium channel inhibitor family. Beta subfamily. Expressed by the venom gland.

The protein localises to the secreted. In terms of biological role, binds to sodium channels (Nav) and inhibits them. Recombinant ANEP delays the convulsion seizure of insect models by 18% and shows anti-neuroexcitatory activity. This Olivierus martensii (Manchurian scorpion) protein is Anti-neuroexcitation peptide 2.